The sequence spans 384 residues: Methyl-CpG-binding domain-containing protein 10 (384 aa).

One can recognise an MBD domain in the interval 4 to 74 (TDELVSIELP…SEFEWTTGET (71 aa)). Residues 65–384 (SEFEWTTGET…QQGAAASVSC (320 aa)) are disordered. Residues 80–91 (RISQKVKATTPT) are compositionally biased toward polar residues. The stretch at 100–224 (KRRSSLTKKD…MEVDTSELEK (125 aa)) forms a coiled coil. Basic and acidic residues-rich tracts occupy residues 106 to 227 (TKKD…KKAG), 234 to 250 (EPSK…KEAQ), and 257 to 269 (DVEK…KTEN). Over residues 270-284 (KGSVTTEANGEQNVT) the composition is skewed to polar residues. Basic and acidic residues predominate over residues 295-365 (EADKGKESKE…NDMKAEDTNR (71 aa)). Residues 310-356 (TEAEANKENDTQESDEKKTEAAANKENETQESDVKKTEAAVAEEKSN) are a coiled coil. S323 is subject to Phosphoserine. Residues 369 to 384 (ANQVQQQQGAAASVSC) are compositionally biased toward low complexity.

In terms of tissue distribution, expressed in leaves, buds, flowers, stems and siliques.

Its subcellular location is the nucleus. Functionally, probable transcriptional regulator. Required for nucleolar dominance that consist in the silencing of rRNA genes inherited from one progenitor in genetic hybrids. This chain is Methyl-CpG-binding domain-containing protein 10 (MBD10), found in Arabidopsis thaliana (Mouse-ear cress).